The following is a 341-amino-acid chain: tRNA N6-adenosine threonylcarbamoyltransferase (341 aa).

Residues histidine 111 and histidine 115 each contribute to the Fe cation site. Substrate is bound by residues leucine 134 to glycine 138, aspartate 167, glycine 180, and asparagine 272. Aspartate 300 serves as a coordination point for Fe cation.

Belongs to the KAE1 / TsaD family. It depends on Fe(2+) as a cofactor.

The protein resides in the cytoplasm. The enzyme catalyses L-threonylcarbamoyladenylate + adenosine(37) in tRNA = N(6)-L-threonylcarbamoyladenosine(37) in tRNA + AMP + H(+). Its function is as follows. Required for the formation of a threonylcarbamoyl group on adenosine at position 37 (t(6)A37) in tRNAs that read codons beginning with adenine. Is involved in the transfer of the threonylcarbamoyl moiety of threonylcarbamoyl-AMP (TC-AMP) to the N6 group of A37, together with TsaE and TsaB. TsaD likely plays a direct catalytic role in this reaction. The polypeptide is tRNA N6-adenosine threonylcarbamoyltransferase (Psychromonas ingrahamii (strain DSM 17664 / CCUG 51855 / 37)).